The chain runs to 258 residues: Ditrans,polycis-undecaprenyl-diphosphate synthase ((2E,6E)-farnesyl-diphosphate specific) (258 aa).

Aspartate 24 is an active-site residue. Aspartate 24 lines the Mg(2+) pocket. Substrate-binding positions include 25–28 (GNGR), tryptophan 29, arginine 37, histidine 41, and 69–71 (SSE). Asparagine 72 (proton acceptor) is an active-site residue. Substrate-binding positions include tryptophan 73, arginine 75, arginine 192, and 198-200 (RIS). Mg(2+) is bound at residue glutamate 211.

The protein belongs to the UPP synthase family. Homodimer. Mg(2+) serves as cofactor.

The enzyme catalyses 8 isopentenyl diphosphate + (2E,6E)-farnesyl diphosphate = di-trans,octa-cis-undecaprenyl diphosphate + 8 diphosphate. Functionally, catalyzes the sequential condensation of isopentenyl diphosphate (IPP) with (2E,6E)-farnesyl diphosphate (E,E-FPP) to yield (2Z,6Z,10Z,14Z,18Z,22Z,26Z,30Z,34E,38E)-undecaprenyl diphosphate (di-trans,octa-cis-UPP). UPP is the precursor of glycosyl carrier lipid in the biosynthesis of bacterial cell wall polysaccharide components such as peptidoglycan and lipopolysaccharide. The chain is Ditrans,polycis-undecaprenyl-diphosphate synthase ((2E,6E)-farnesyl-diphosphate specific) from Xanthomonas oryzae pv. oryzae (strain KACC10331 / KXO85).